Reading from the N-terminus, the 266-residue chain is Tryptophan synthase alpha chain (266 aa).

Catalysis depends on proton acceptor residues Glu-45 and Asp-56.

The protein belongs to the TrpA family. In terms of assembly, tetramer of two alpha and two beta chains.

The catalysed reaction is (1S,2R)-1-C-(indol-3-yl)glycerol 3-phosphate + L-serine = D-glyceraldehyde 3-phosphate + L-tryptophan + H2O. The protein operates within amino-acid biosynthesis; L-tryptophan biosynthesis; L-tryptophan from chorismate: step 5/5. In terms of biological role, the alpha subunit is responsible for the aldol cleavage of indoleglycerol phosphate to indole and glyceraldehyde 3-phosphate. The polypeptide is Tryptophan synthase alpha chain (Novosphingobium aromaticivorans (strain ATCC 700278 / DSM 12444 / CCUG 56034 / CIP 105152 / NBRC 16084 / F199)).